A 359-amino-acid chain; its full sequence is Mitochondrial glutathione transporter SLC25A39 (359 aa).

Residues 1–14 (MDDQDPGGISPLQQ) lie on the Mitochondrial intermembrane side of the membrane. Solcar repeat units lie at residues 9 to 151 (ISPL…LKAF), 159 to 243 (SDLY…VKSW), and 253 to 347 (TSVG…GKSF). A helical transmembrane segment spans residues 15-35 (MVASGAGAVVTSLFMTPLDVV). Topologically, residues 36 to 121 (KVRLQSQRPS…VKIVRHEGTR (86 aa)) are mitochondrial matrix. Positions 74, 78, 88, and 94 each coordinate [2Fe-2S] cluster. The helical transmembrane segment at 122-142 (TLWSGLPATLVMTVPATAIYF) threads the bilayer. At 143–164 (TAYDQLKAFLCGQSLTSDLYAP) the chain is on the mitochondrial intermembrane side. The helical transmembrane segment at 165-185 (MVAGALARMGTVTVVSPLELV) threads the bilayer. At 186–214 (RTKLQAQHVSYRELASSVQAAVTQGGWRS) the chain is on the mitochondrial matrix side. A helical membrane pass occupies residues 215–235 (LWLGWGPTALRDVPFSALYWF). Over 236 to 255 (NYELVKSWLSGLRPKDQTSV) the chain is Mitochondrial intermembrane. A helical transmembrane segment spans residues 256-276 (GISFVAGGISGMVAATLTLPF). Residues 277–317 (DVVKTQRQMSLGAVEAVRVKPPRVDSTWLLLRRIRAESGTR) lie on the Mitochondrial matrix side of the membrane. The chain crosses the membrane as a helical span at residues 318-338 (GLFAGFLPRIIKAAPSCAIMI). Over 339–359 (STYEFGKSFFQRLNQEQPLGR) the chain is Mitochondrial intermembrane.

The protein belongs to the mitochondrial carrier (TC 2.A.29) family. In terms of processing, cleaved and degraded by AFG3L2; degradation by AFG3L2 is regulated by the ability of SLC25A39 to bind iron-sulfur. In absence of mitochondrial glutathione, SLC25A39 binds iron-sulfur, preventing cleavage and degradation by AFG3L2. The presence of mitochondrial glutathione prevents iron-sulfur-binding to SLC25A39, promoting cleavage and degradation by AFG3L2. As to expression, abundant expression in bone marrow, spleen, testis and kidney.

The protein resides in the mitochondrion inner membrane. The enzyme catalyses glutathione(in) = glutathione(out). The activity of SLC25A39 is regulated by levels of mitochondrial glutathione via its ability to bind [2Fe-2S] iron-sulfur cluster. Upon physiological levels of mitochondrial glutathione, glutathione prevents iron-sulfur-binding to SLC25A39 promoting cleavage and degradation by AFG3L2. Upon depletion of mitochondrial glutathione, SLC25A39 binds iron-sulfur, preventing cleavage and degradation by AFG3L2. In terms of biological role, mitochondrial transporter required for glutathione import into mitochondria. Glutathione, which plays key roles in oxidative metabolism, is produced exclusively in the cytosol and is imported in many organelles. Mitochondrial glutathione is required for the activity and stability of proteins containing iron-sulfur clusters, as well as erythropoiesis. This chain is Mitochondrial glutathione transporter SLC25A39, found in Mus musculus (Mouse).